Consider the following 256-residue polypeptide: Isoprenyl transferase (256 aa).

Positions 1-22 (MLEKFSKWKGNRSNHTTPSHSL) are disordered. Aspartate 36 is a catalytic residue. Aspartate 36 is a binding site for Mg(2+). Substrate-binding positions include 37–40 (GNGR), tryptophan 41, arginine 49, histidine 53, and 81–83 (STE). The Proton acceptor role is filled by asparagine 84. Substrate contacts are provided by residues tryptophan 85, arginine 87, arginine 204, and 210–212 (RLS). Glutamate 223 provides a ligand contact to Mg(2+).

It belongs to the UPP synthase family. As to quaternary structure, homodimer. Mg(2+) is required as a cofactor.

In terms of biological role, catalyzes the condensation of isopentenyl diphosphate (IPP) with allylic pyrophosphates generating different type of terpenoids. The chain is Isoprenyl transferase from Halalkalibacterium halodurans (strain ATCC BAA-125 / DSM 18197 / FERM 7344 / JCM 9153 / C-125) (Bacillus halodurans).